The primary structure comprises 256 residues: Alcohol dehydrogenase (256 aa).

12–35 is an NAD(+) binding site; it reads FVAGLGGIGLDTSKELVKRDLKNL. Substrate is bound at residue Ser140. Tyr153 acts as the Proton acceptor in catalysis.

The protein belongs to the short-chain dehydrogenases/reductases (SDR) family. In terms of assembly, homodimer.

It catalyses the reaction a primary alcohol + NAD(+) = an aldehyde + NADH + H(+). The enzyme catalyses a secondary alcohol + NAD(+) = a ketone + NADH + H(+). The polypeptide is Alcohol dehydrogenase (Adh) (Drosophila erecta (Fruit fly)).